A 1029-amino-acid polypeptide reads, in one-letter code: Multiple C2 domain and transmembrane region protein 6 (1029 aa).

The C2 1 domain occupies 1–111 (MNKLVVEIVD…SGVQRYPLDK (111 aa)). The segment at 187–224 (TKKKEKESRTFHSIGAHAGGGGGAPPMSQAKQAYPPPP) is disordered. C2 domains are found at residues 277-398 (RSSG…PQWY), 437-562 (RVSH…PRWF), and 605-727 (FSSD…THFY). Ca(2+)-binding residues include D310, D316, D363, D365, and D371. Transmembrane regions (helical) follow at residues 864 to 884 (LILV…LFVI) and 976 to 996 (FALI…AIII).

This sequence belongs to the MCTP family. Ca(2+) is required as a cofactor. In terms of tissue distribution, expressed in the vascular tissues of cotyledons and rosette leaves. Accumulates in roots caps and shoot apical meristems (SAMs). Observed in flowers.

It localises to the cell membrane. Its subcellular location is the cytoplasm. It is found in the endosome membrane. In terms of biological role, regulates flowering time under long days. May function as a signaling molecule by regulating the trafficking of other regulators. This is Multiple C2 domain and transmembrane region protein 6 from Arabidopsis thaliana (Mouse-ear cress).